Reading from the N-terminus, the 349-residue chain is Glycerol-1-phosphate dehydrogenase [NAD(P)+] (349 aa).

NAD(+) contacts are provided by residues 95–99 (GKSID) and 117–120 (TSPS). Aspartate 122 provides a ligand contact to substrate. An NAD(+)-binding site is contributed by serine 126. Residue aspartate 169 coordinates substrate. 2 residues coordinate Zn(2+): aspartate 169 and histidine 249. Histidine 253 is a binding site for substrate. Histidine 265 serves as a coordination point for Zn(2+).

The protein belongs to the glycerol-1-phosphate dehydrogenase family. Homodimer. Zn(2+) serves as cofactor.

The protein resides in the cytoplasm. It catalyses the reaction sn-glycerol 1-phosphate + NAD(+) = dihydroxyacetone phosphate + NADH + H(+). The catalysed reaction is sn-glycerol 1-phosphate + NADP(+) = dihydroxyacetone phosphate + NADPH + H(+). The protein operates within membrane lipid metabolism; glycerophospholipid metabolism. Catalyzes the NAD(P)H-dependent reduction of dihydroxyacetonephosphate (DHAP or glycerone phosphate) to glycerol 1-phosphate (G1P). The G1P thus generated is used as the glycerophosphate backbone of phospholipids in the cellular membranes of Archaea. This Hyperthermus butylicus (strain DSM 5456 / JCM 9403 / PLM1-5) protein is Glycerol-1-phosphate dehydrogenase [NAD(P)+].